Reading from the N-terminus, the 139-residue chain is Large ribosomal subunit protein uL16 (139 aa).

Residues 1–17 (MLMPKRVKYRKTQRGRM) are compositionally biased toward basic residues. Residues 1-24 (MLMPKRVKYRKTQRGRMKGNSGRG) form a disordered region.

The protein belongs to the universal ribosomal protein uL16 family. Part of the 50S ribosomal subunit.

Binds 23S rRNA and is also seen to make contacts with the A and possibly P site tRNAs. The protein is Large ribosomal subunit protein uL16 of Pelodictyon phaeoclathratiforme (strain DSM 5477 / BU-1).